A 257-amino-acid polypeptide reads, in one-letter code: DNA repair protein RecO (257 aa).

It belongs to the RecO family.

Functionally, involved in DNA repair and RecF pathway recombination. The polypeptide is DNA repair protein RecO (Streptococcus sanguinis (strain SK36)).